Reading from the N-terminus, the 304-residue chain is Phosphatidylglycerol--prolipoprotein diacylglyceryl transferase (304 aa).

The next 4 membrane-spanning stretches (helical) occupy residues 18 to 38, 58 to 78, 106 to 126, and 133 to 153; these read LGPF…LIGL, LLPI…VAFE, IWGG…AVLI, and QAFW…QAIG. Arginine 154 serves as a coordination point for a 1,2-diacyl-sn-glycero-3-phospho-(1'-sn-glycerol). The next 3 helical transmembrane spans lie at 195 to 215, 221 to 241, and 268 to 288; these read PTFL…IVLF, GLLK…YSLG, and IAQL…WWLY.

The protein belongs to the Lgt family.

Its subcellular location is the cell inner membrane. The catalysed reaction is L-cysteinyl-[prolipoprotein] + a 1,2-diacyl-sn-glycero-3-phospho-(1'-sn-glycerol) = an S-1,2-diacyl-sn-glyceryl-L-cysteinyl-[prolipoprotein] + sn-glycerol 1-phosphate + H(+). Its pathway is protein modification; lipoprotein biosynthesis (diacylglyceryl transfer). Catalyzes the transfer of the diacylglyceryl group from phosphatidylglycerol to the sulfhydryl group of the N-terminal cysteine of a prolipoprotein, the first step in the formation of mature lipoproteins. This Prochlorococcus marinus (strain MIT 9303) protein is Phosphatidylglycerol--prolipoprotein diacylglyceryl transferase.